A 1216-amino-acid polypeptide reads, in one-letter code: Histone-lysine N-methyltransferase SETDB1-B (1216 aa).

Residues 38–61 (KADLEQLQEWVEQREKEVADIDAL) are a coiled coil. Tudor domains are found at residues 266–329 (RLFV…LKKT) and 356–412 (LLKP…NLKM). The interval 417-513 (SQEKKMAGQQ…QGMPSDLQPK (97 aa)) is disordered. The segment covering 467-478 (PVAPQPAGPPQP) has biased composition (pro residues). Residues 482–498 (ESPSFKSQMAKKSTGQL) show a composition bias toward polar residues. The MBD domain occupies 595-666 (HRGRNPLLTP…EMFCLDPYVL (72 aa)). The 74-residue stretch at 728-801 (VGCDCTDGCR…MCTNRLVQHG (74 aa)) folds into the Pre-SET domain. The Zn(2+) site is built by Cys-730, Cys-732, Cys-736, Cys-742, Cys-744, Cys-782, Cys-786, Cys-788, and Cys-793. In terms of domain architecture, SET spans 804-1179 (VRLQLFKTQN…AGTELTWDYN (376 aa)). S-adenosyl-L-methionine is bound by residues 814–816 (KGW), Asp-852, and Tyr-854. Disordered regions lie at residues 892–944 (LPAS…DTFV), 961–1057 (RRQA…KTQA), and 1081–1108 (KSGG…NGPK). Positions 918 to 940 (DSSEESDDEKDDDSNEDDSDSSD) are enriched in acidic residues. Basic and acidic residues-rich tracts occupy residues 966 to 976 (GLKEESQDSKD) and 983 to 997 (GEDR…ETGK). The span at 1003–1016 (WLTNQSSTSANQSV) shows a compositional bias: polar residues. 2 stretches are compositionally biased toward basic and acidic residues: residues 1020–1029 (GGIKTEKKDV) and 1046–1055 (DDNKEREKKT). A compositionally biased stretch (gly residues) spans 1082 to 1105 (SGGGGAGGGGSGPSHGHGGGGGDN). S-adenosyl-L-methionine-binding positions include Arg-1133 and 1136 to 1137 (NH). Zn(2+) is bound by residues Cys-1139, Cys-1192, Cys-1194, and Cys-1199. In terms of domain architecture, Post-SET spans 1188–1204 (KELLCCCGSTECRGRLL).

The protein belongs to the class V-like SAM-binding methyltransferase superfamily. Histone-lysine methyltransferase family. Suvar3-9 subfamily.

It localises to the nucleus. Its subcellular location is the chromosome. It carries out the reaction L-lysyl(4)-[histone H3] + 3 S-adenosyl-L-methionine = N(6),N(6),N(6)-trimethyl-L-lysyl(4)-[histone H3] + 3 S-adenosyl-L-homocysteine + 3 H(+). Histone methyltransferase that specifically trimethylates 'Lys-9' of histone H3. H3 'Lys-9' trimethylation represents a specific tag for epigenetic transcriptional repression by recruiting HP1 (CBX1, CBX3 and/or CBX5) proteins to methylated histones. Mainly functions in euchromatin regions, thereby playing a central role in the silencing of euchromatic genes. H3 'Lys-9' trimethylation is coordinated with DNA methylation. Plays a role in promoter hypermethylation and transcriptional silencing of tumor suppressor genes (TSGs) or other tumor-related genes. Also required to maintain a transcriptionally repressive state of genes in undifferentiated embryonic stem cells (ESCs). Associates at promoter regions of tumor suppressor genes (TSGs) leading to their gene silencing. This chain is Histone-lysine N-methyltransferase SETDB1-B (setdb1b), found in Danio rerio (Zebrafish).